The chain runs to 87 residues: Small ribosomal subunit protein bS20 (87 aa).

The tract at residues Met-1–Ala-22 is disordered. The span at Ala-7 to Ala-19 shows a compositional bias: basic residues.

It belongs to the bacterial ribosomal protein bS20 family.

Binds directly to 16S ribosomal RNA. The chain is Small ribosomal subunit protein bS20 from Laribacter hongkongensis (strain HLHK9).